The sequence spans 420 residues: Dynein axonemal assembly factor 4 (420 aa).

A CS domain is found at 3–87 (LQVSDYSWQQ…KEAAMWETLS (85 aa)). A mediates interaction with ESR1 and STUB1 region spans residues 7-103 (DYSWQQTKTA…ETMQRIREKS (97 aa)). 3 TPR repeats span residues 290 to 323 (PEWLKDKGNKLFATENYLAAINAYNLAIRLNNKM), 324 to 357 (PLLYLNRAACHLKLKNLHKAIEDSSKALELLMPP), and 366 to 399 (MKAHVRRGTAFCQLELYVEGLQDYEAALKIDPSN).

In terms of assembly, interacts with ZMYND10. Interacts with STUB1. Interacts with ESR1 and ESR2. Interacts with DNAAF2. Interacts with CCT3, CCT4, CCT5 and CCT8. Interacts with DNAAF6/PIH1D3.

The protein localises to the nucleus. It localises to the cytoplasm. Its subcellular location is the cell projection. It is found in the neuron projection. The protein resides in the dynein axonemal particle. In terms of biological role, involved in neuronal migration during development of the cerebral neocortex. May regulate the stability and proteasomal degradation of the estrogen receptors that play an important role in neuronal differentiation, survival and plasticity. Axonemal dynein assembly factor required for ciliary motility. The polypeptide is Dynein axonemal assembly factor 4 (Pongo pygmaeus (Bornean orangutan)).